The chain runs to 1663 residues: Complement C3 (1663 aa).

Positions Met-1–Gly-22 are cleaved as a signal peptide. Ser-38 and Ser-70 each carry phosphoserine; by FAM20C. Asn-85 carries N-linked (GlcNAc...) asparagine glycosylation. Residues Ser-297 and Ser-303 each carry the phosphoserine; by FAM20C modification. 13 cysteine pairs are disulfide-bonded: Cys-559–Cys-816, Cys-627–Cys-662, Cys-693–Cys-720, Cys-694–Cys-727, Cys-707–Cys-728, Cys-873–Cys-1513, Cys-1101–Cys-1158, Cys-1358–Cys-1489, Cys-1389–Cys-1458, Cys-1506–Cys-1511, Cys-1518–Cys-1590, Cys-1537–Cys-1661, and Cys-1637–Cys-1646. Position 672 is a phosphoserine; by FAM20C (Ser-672). The 36-residue stretch at Cys-693–Cys-728 folds into the Anaphylatoxin-like domain. An N-linked (GlcNAc...) asparagine glycan is attached at Asn-939. Residues Arg-954–Asp-973 form a disordered region. Position 968 is a phosphoserine; by FAM20C (Ser-968). Positions Cys-1010 to Gln-1013 form a cross-link, isoglutamyl cysteine thioester (Cys-Gln). Residue Ser-1321 is modified to Phosphoserine; by FAM20C. The NTR domain occupies Cys-1518 to Cys-1661. A Phosphoserine; by FAM20C modification is found at Ser-1573. Residue Asn-1617 is glycosylated (N-linked (GlcNAc...) asparagine). The interaction with CFP/properdin stretch occupies residues Glu-1634–Phe-1659.

As to quaternary structure, in absence of complement activation, the C3 precursor is first processed by the removal of 4 Arg residues, forming two chains, beta and alpha, linked by a disulfide bond. In terms of assembly, complement C3b is composed of complement C3b and complement C3 beta chains that are associated via disulfide bonds. Non-enzymatic component of the C5 convertase, also named C4bC2bC3b, composed of the serine protease complement C2b (C2), complement C3b, as well as complement C4b (C4). Non-enzymatic component of the C5 convertase of the alternative complement pathways composed of the serine protease complement CFB and complement C3b. Interacts with CFP; interaction takes place together with CFB in the alternative complement system and allows the complex to become active. Interacts with CR1 (via Sushi 8 and Sushi 9 domains). Interacts with CFH. Interacts with CFH. Interacts with CR2. As to quaternary structure, during pregnancy, C3dg exists as a complex (probably a 2:2:2 heterohexamer) with AGT and the proform of PRG2. Interacts with CR2 (via the N-terminal Sushi domains 1 and 2). In terms of assembly, (Microbial infection) C3b interacts with herpes simplex virus 1 (HHV-1) and herpes simplex virus 2 (HHV-2) envelope glycoprotein C; this interaction inhibits the activation of the complement system. (Microbial infection) Interacts with Staphylococcus aureus immunoglobulin-binding protein Sbi; this interaction prevents the association between C3dg and CR2. As to quaternary structure, (Microbial infection) Interacts with Staphylococcus aureus protein Fib. Post-translationally, C3 precursor is first processed by the removal of 4 Arg residues, forming two chains, beta and alpha, linked by a disulfide bond. During activation of the complement systems, the alpha chain is cleaved into C3a and C3b by the C3 convertase: C3b stays linked to the beta chain, while C3a is released in the plasma. The alpha chain is cleaved by the serine protease complement C2b component of the C3 convertase to generate C3a and C3b following activation by the classical, lectin and GZMK complement systems. The alpha chain is cleaved by CFB component of the C3 convertase to generate C3a and C3b following activation by the alternative complement system. In terms of processing, C3a is further processed by carboxypeptidases to release the C-terminal arginine residue generating the acylation stimulating protein (ASP). Levels of ASP are increased in adipocytes in the postprandial period and by insulin and dietary chylomicrons. Complement C3b is rapidly split in two positions by factor I (CFI) and a cofactor (CFH) to form iC3b (inactivated C3b) and C3f which is released. CFI and CFH catalyze proteolytic degradation of already-deposited complement C3b. Then iC3b is slowly cleaved (possibly by CFI) to form C3c (beta chain + alpha' chain fragment 1 + alpha' chain fragment 2), C3dg and C3f. Other proteases produce other fragments such as C3d or C3g. Post-translationally, upon activation, the internal thioester bond reacts with carbohydrate antigens on the target surface to form amide or ester bonds, leading to covalent association with the surface of pathogens. In terms of processing, complement C3b interacts with complement C4b via a thioester linkage. Phosphorylated by FAM20C in the extracellular medium. Post-translationally, (Microbial infection) C3 is cleaved by Staphylococcus aureus aureolysin; this cleavage renders C3a and C3b inactive. C3b is rapidly degraded by host factors CFH and CFI preventing its deposition on the bacterial surface while C3a is further inactivated by aureolysin. In terms of processing, (Microbial infection) Complement C3 beta chain is cleaved and inactivated by S.pyogenes SpeB. (Microbial infection) Cleaved by N.meningitidis NalP between Leu-744 and Gly-745, generating a slightly shorter C3 alpha form and a slightly longer C3 beta form. The C3b-like fragment is degraded in the presence of the complement regulators CFH and CFI, preventing its deposition on the bacterial surface. Plasma. As to expression, produced in adipocytes and released into the plasma during both the fasting and postprandial periods.

Its subcellular location is the secreted. The protein localises to the cell surface. With respect to regulation, complement activation is inhibited by VSIG4. Its function is as follows. Precursor of non-enzymatic components of the classical, alternative, lectin and GZMK complement pathways, which consist in a cascade of proteins that leads to phagocytosis and breakdown of pathogens and signaling that strengthens the adaptive immune system. In terms of biological role, non-enzymatic component of C5 convertase. Generated following cleavage by C3 convertase, it covalently attaches to the surface of pathogens, where it acts as an opsonin that marks the surface of antigens for removal. Complement C3b binds covalently via its reactive thioester, to cell surface carbohydrates or immune aggregates. Together with complement C4b, it then recruits the serine protease complement C2b to form the C5 convertase, which cleaves and activate C5, the next component of the complement pathways. In the alternative complement pathway, recruits the serine protease CFB to form the C5 convertase that cleaves and activates C5. Mediator of local inflammatory process released following cleavage by C3 convertase. Acts by binding to its receptor, C3AR1, activating G protein-coupled receptor signaling, promoting the phosphorylation, ARRB2-mediated internalization and endocytosis of C3AR1. C3a anaphylatoxin stimulates the activation of immune cells such as mast cells and basophilic leukocytes to release inflammation agents, such as cytokines, chemokines and histamine, which promote inflammation development. Also acts as potent chemoattractant for the migration of macrophages and neutrophils to the inflamed tissues, resulting in neutralization of the inflammatory triggers by multiple ways, such as phagocytosis and generation of reactive oxidants. Functionally, adipogenic hormone that stimulates triglyceride synthesis and glucose transport in adipocytes, regulating fat storage and playing a role in postprandial triglyceride clearance. Appears to stimulate triglyceride synthesis via activation of the PLC, MAPK and AKT signaling pathways. Acts by binding to its receptor, C5AR2, activating G protein-coupled receptor signaling, promoting the phosphorylation, ARRB2-mediated internalization and endocytosis of C5AR2. Its function is as follows. Acts as a chemoattractant for neutrophils in chronic inflammation. This is Complement C3 from Homo sapiens (Human).